The sequence spans 274 residues: Penicillin-insensitive murein endopeptidase (274 aa).

The signal sequence occupies residues 1-19 (MNKTAIALLALLASSVSLA). 3 disulfide bridges follow: Cys44–Cys265, Cys187–Cys235, and Cys216–Cys223. His110, His113, Asp120, Asp147, His150, and His211 together coordinate Zn(2+). Residues 227 to 274 (PLPPPGDGCGAELQSWFEPPKPGTTKPEKKTPPPLPPSCQALLDEHVI) form a disordered region.

This sequence belongs to the peptidase M74 family. As to quaternary structure, dimer. Zn(2+) serves as cofactor.

The protein localises to the periplasm. Functionally, murein endopeptidase that cleaves the D-alanyl-meso-2,6-diamino-pimelyl amide bond that connects peptidoglycan strands. Likely plays a role in the removal of murein from the sacculus. This Escherichia coli O157:H7 protein is Penicillin-insensitive murein endopeptidase.